The chain runs to 476 residues: Proline--tRNA ligase 2 (476 aa).

The protein belongs to the class-II aminoacyl-tRNA synthetase family. ProS type 3 subfamily. Homodimer.

It localises to the cytoplasm. The catalysed reaction is tRNA(Pro) + L-proline + ATP = L-prolyl-tRNA(Pro) + AMP + diphosphate. Catalyzes the attachment of proline to tRNA(Pro) in a two-step reaction: proline is first activated by ATP to form Pro-AMP and then transferred to the acceptor end of tRNA(Pro). The sequence is that of Proline--tRNA ligase 2 from Bacillus thuringiensis (strain Al Hakam).